The primary structure comprises 247 residues: Mitochondrial inner membrane protease ATP23 (247 aa).

Residue H146 coordinates a divalent metal cation. Residue E147 is part of the active site. H150 contacts a divalent metal cation.

This sequence belongs to the peptidase M76 family.

The protein resides in the mitochondrion inner membrane. Has a dual role in the assembly of mitochondrial ATPase. Acts as a protease that removes N-terminal residues of mitochondrial ATPase CF(0) subunit 6 at the intermembrane space side. Also involved in the correct assembly of the membrane-embedded ATPase CF(0) particle, probably mediating association of subunit 6 with the subunit 9 ring. The sequence is that of Mitochondrial inner membrane protease ATP23 (ATP23) from Eremothecium gossypii (strain ATCC 10895 / CBS 109.51 / FGSC 9923 / NRRL Y-1056) (Yeast).